The chain runs to 585 residues: A-type ATP synthase subunit A (585 aa).

231–238 (GPFGSGKT) contributes to the ATP binding site.

Belongs to the ATPase alpha/beta chains family. Has multiple subunits with at least A(3), B(3), C, D, E, F, H, I and proteolipid K(x).

It is found in the cell membrane. The enzyme catalyses ATP + H2O + 4 H(+)(in) = ADP + phosphate + 5 H(+)(out). In terms of biological role, produces ATP from ADP in the presence of a proton gradient across the membrane. The archaeal alpha chain is a catalytic subunit. Its function is as follows. Component of the A-type ATP synthase that produces ATP from ADP in the presence of a proton gradient across the membrane. The A chain is the catalytic subunit. This Thermococcus sp. (strain KI) protein is A-type ATP synthase subunit A.